The chain runs to 379 residues: DnaJ homolog subfamily B member 14 (379 aa).

The Cytoplasmic portion of the chain corresponds to 1 to 244; that stretch reads MEGNRDEAEK…GHEREEERGD (244 aa). The disordered stretch occupies residues 55–94; sequence STAGNSPHCRKPSGSGDQSKPNCTKDSTSGSGEGGKGYTK. Polar residues predominate over residues 69-84; sequence SGDQSKPNCTKDSTSG. One can recognise a J domain in the interval 108 to 172; the sequence is NYYEVLGVTK…EKRKQYDLTG (65 aa). The disordered stretch occupies residues 219 to 241; the sequence is SNGRAGYSQQHQHRHSGHEREEE. A helical membrane pass occupies residues 245 to 265; it reads GGFSVFIQLMPIIVLILVSLL. The Lumenal portion of the chain corresponds to 266–379; that stretch reads SQLMVSNPPY…ERLTSLYKGG (114 aa).

Belongs to the DnaJ family. DNAJB12/DNAJB14 subfamily. As to quaternary structure, interacts (via J domain) with HSPA8/Hsc70. Forms a multiprotein complex, at least composed of DNAJB12, DNAJB14, HSPA8/Hsc70 and SGTA; interaction with DNAJB14 and HSPA8/Hsc70 is direct.

It localises to the endoplasmic reticulum membrane. The protein resides in the nucleus membrane. Acts as a co-chaperone with HSPA8/Hsc70; required to promote protein folding and trafficking, prevent aggregation of client proteins, and promote unfolded proteins to endoplasmic reticulum-associated degradation (ERAD) pathway. Acts by determining HSPA8/Hsc70's ATPase and polypeptide-binding activities. Can also act independently of HSPA8/Hsc70: together with DNAJB12, acts as a chaperone that promotes maturation of potassium channels KCND2 and KCNH2 by stabilizing nascent channel subunits and assembling them into tetramers. While stabilization of nascent channel proteins is dependent on HSPA8/Hsc70, the process of oligomerization of channel subunits is independent of HSPA8/Hsc70. When overexpressed, forms membranous structures together with DNAJB12 and HSPA8/Hsc70 within the nucleus; the role of these structures, named DJANGOs, is still unclear. Its function is as follows. (Microbial infection) In case of infection by polyomavirus, involved in the virus endoplasmic reticulum membrane penetration and infection. This Homo sapiens (Human) protein is DnaJ homolog subfamily B member 14.